The primary structure comprises 352 residues: Protein-glutamate methylesterase/protein-glutamine glutaminase (352 aa).

Residues 5–122 (RAIVIDDSAF…SLDIRNVEDE (118 aa)) form the Response regulatory domain. Residue Asp56 is modified to 4-aspartylphosphate. Residues 163–352 (RSIVSIGTST…IPSLIVKQLT (190 aa)) enclose the CheB-type methylesterase domain. Active-site residues include Ser171, His198, and Asp294.

This sequence belongs to the CheB family. In terms of processing, phosphorylated by CheA. Phosphorylation of the N-terminal regulatory domain activates the methylesterase activity.

The protein localises to the cytoplasm. The catalysed reaction is [protein]-L-glutamate 5-O-methyl ester + H2O = L-glutamyl-[protein] + methanol + H(+). It catalyses the reaction L-glutaminyl-[protein] + H2O = L-glutamyl-[protein] + NH4(+). In terms of biological role, involved in chemotaxis. Part of a chemotaxis signal transduction system that modulates chemotaxis in response to various stimuli. Catalyzes the demethylation of specific methylglutamate residues introduced into the chemoreceptors (methyl-accepting chemotaxis proteins or MCP) by CheR. Also mediates the irreversible deamidation of specific glutamine residues to glutamic acid. The sequence is that of Protein-glutamate methylesterase/protein-glutamine glutaminase from Oceanobacillus iheyensis (strain DSM 14371 / CIP 107618 / JCM 11309 / KCTC 3954 / HTE831).